A 208-amino-acid polypeptide reads, in one-letter code: Ribosomal RNA large subunit methyltransferase E (208 aa).

S-adenosyl-L-methionine-binding residues include G61, W63, D81, D97, and D122. K162 functions as the Proton acceptor in the catalytic mechanism.

The protein belongs to the class I-like SAM-binding methyltransferase superfamily. RNA methyltransferase RlmE family.

The protein resides in the cytoplasm. The enzyme catalyses uridine(2552) in 23S rRNA + S-adenosyl-L-methionine = 2'-O-methyluridine(2552) in 23S rRNA + S-adenosyl-L-homocysteine + H(+). Functionally, specifically methylates the uridine in position 2552 of 23S rRNA at the 2'-O position of the ribose in the fully assembled 50S ribosomal subunit. This Pseudomonas putida (strain GB-1) protein is Ribosomal RNA large subunit methyltransferase E.